A 317-amino-acid polypeptide reads, in one-letter code: DNA repair nuclease/redox regulator APEX1 (317 aa).

The tract at residues 1-58 is disordered; the sequence is MPKRGKKAAADDGEEPKSEPETKKSKGAAKKTEKEAAGEGPVLYEDPPDQKTSPSGKS. Residues 2-32 form a necessary for interaction with YBX1, binding to RNA, association together with NPM1 to rRNA, endoribonuclease activity on abasic RNA and localization in the nucleoli region; sequence PKRGKKAAADDGEEPKSEPETKKSKGAAKKT. N6-acetyllysine; by EP300 occurs at positions 6 and 7. The Nuclear localization signal (NLS) signature appears at 8–12; that stretch reads AAADD. Residues 15-37 are compositionally biased toward basic and acidic residues; the sequence is EPKSEPETKKSKGAAKKTEKEAA. Position 18 is a phosphoserine (Ser18). Residues 22 to 32 are necessary for interaction with NPM1 and for efficient rRNA binding; the sequence is TKKSKGAAKKT. N6-acetyllysine occurs at positions 26, 30, 31, and 34. Position 53 is a phosphoserine (Ser53). Residues 63-79 carry the Nuclear export signal (NES) motif; it reads ICSWNVDGLRAWIKKKG. The residue at position 64 (Cys64) is an S-nitrosocysteine; alternate. Cysteines 64 and 92 form a disulfide. Asp69 contributes to the Mg(2+) binding site. Cys92 is modified (S-nitrosocysteine; alternate). Glu95 lines the Mg(2+) pocket. Tyr170 is a catalytic residue. Lys196 bears the N6-acetyllysine mark. Asp209 and Asn211 together coordinate Mg(2+). Residue Asp209 is the Proton donor/acceptor of the active site. Thr232 carries the post-translational modification Phosphothreonine; by CDK5. The segment at 288 to 317 is mitochondrial targeting sequence (MTS); that stretch reads HSLLPALCDSKIRSKALGSDHCPITLYLAL. Asp307 lines the Mg(2+) pocket. Cys309 is subject to S-nitrosocysteine.

This sequence belongs to the DNA repair enzymes AP/ExoA family. As to quaternary structure, monomer. Homodimer; disulfide-linked. Component of the SET complex, composed of at least APEX1, SET, ANP32A, HMGB2, NME1 and TREX1. Associates with the dimer XRCC5/XRCC6 in a DNA-dependent manner. Interacts with SIRT1; the interaction is increased in the context of genotoxic stress. Interacts with HDAC1, HDAC2 and HDAC3; the interactions are not dependent on the APEX1 acetylation status. Interacts with XRCC1; the interaction is induced by SIRT1 and increased with the APEX1 acetylated form. Interacts with NPM1 (via N-terminal domain); the interaction is RNA-dependent and decreases in hydrogen peroxide-damaged cells. Interacts (via N-terminus) with YBX1 (via C-terminus); the interaction is increased in presence of APEX1 acetylated at Lys-6 and Lys-7. Interacts with HNRNPL; the interaction is DNA-dependent. Interacts (via N-terminus) with KPNA1 and KPNA2. Interacts with TXN; the interaction stimulates the FOS/JUN AP-1 complex DNA-binding activity in a redox-dependent manner. Interacts with GZMA, KRT8, MDM2, POLB, PRDX6, PRPF19, RPLP0, TOMM20 and WDR77. Binds to CDK5. Requires Mg(2+) as cofactor. Mn(2+) is required as a cofactor. Phosphorylated. Phosphorylation by kinase PKC or casein kinase CK2 results in enhanced redox activity that stimulates binding of the FOS/JUN AP-1 complex to its cognate binding site. AP-endodeoxyribonuclease activity is not affected by CK2-mediated phosphorylation. Phosphorylation of Thr-232 by CDK5 in response to MPP(+)/MPTP (1-methyl-4-phenylpyridinium) reduces AP-endodeoxyribonuclease activity resulting in accumulation of DNA damage and contributing to neuronal death. In terms of processing, acetylated on Lys-6 and Lys-7. Acetylation is increased by the transcriptional coactivator EP300 acetyltransferase, genotoxic agents like H(2)O(2) and methyl methanesulfonate (MMS). Acetylation increases its binding affinity to the negative calcium response element (nCaRE) DNA promoter. The acetylated form induces a stronger binding of YBX1 to the Y-box sequence in the MDR1 promoter than the unacetylated form. Deacetylated on lysines. Lys-6 and Lys-7 are deacetylated by SIRT1. Post-translationally, cleaved at Lys-30 by granzyme A to create the mitochondrial form; leading in reduction of binding to DNA, AP endodeoxyribonuclease activity, redox activation of transcription factors and to enhanced cell death. Cleaved by granzyme K; leading to intracellular ROS accumulation and enhanced cell death after oxidative stress. Cys-64 and Cys-92 are nitrosylated in response to nitric oxide (NO) and lead to the exposure of the nuclear export signal (NES). In terms of processing, ubiquitinated by MDM2; leading to translocation to the cytoplasm and proteasomal degradation. As to expression, expressed in both resting and stimulated B cells stimulated to switch (at protein level).

Its subcellular location is the nucleus. The protein resides in the nucleolus. It localises to the nucleus speckle. The protein localises to the endoplasmic reticulum. It is found in the cytoplasm. Its subcellular location is the mitochondrion. It carries out the reaction a deoxyribonucleotide-2'-deoxyribose-5'-monophosphate-DNA + H2O = a 5'-end 2'-deoxyribose-5'-monophosphate-DNA + a 3'-end 2'-deoxyribonucleotide-DNA + H(+). It catalyses the reaction Exonucleolytic cleavage in the 3'- to 5'-direction to yield nucleoside 5'-phosphates.. The enzyme catalyses a 3'-end 2'-deoxyribonucleotide-3'-phosphoglycolate-DNA + H2O = 2-phosphoglycolate + a 3'-end 2'-deoxyribonucleotide-DNA + H(+). The catalysed reaction is a 3'-end 2'-deoxyribonucleotide-8-oxoguanine-DNA + H2O = 8-oxo-dGMP + a 3'-end 2'-deoxyribonucleotide-DNA + H(+). Its activity is regulated as follows. NPM1 stimulates endodeoxyribonuclease activity on double-stranded DNA with AP sites, but inhibits endoribonuclease activity on single-stranded RNA containing AP sites. Functionally, multifunctional protein that plays a central role in the cellular response to oxidative stress. The two major activities of APEX1 are DNA repair and redox regulation of transcriptional factors. Functions as an apurinic/apyrimidinic (AP) endodeoxyribonuclease in the base excision repair (BER) pathway of DNA lesions induced by oxidative and alkylating agents. Initiates repair of AP sites in DNA by catalyzing hydrolytic incision of the phosphodiester backbone immediately adjacent to the damage, generating a single-strand break with 5'-deoxyribose phosphate and 3'-hydroxyl ends. Also incises at AP sites in the DNA strand of DNA/RNA hybrids, single-stranded DNA regions of R-loop structures, and single-stranded RNA molecules. Operates at switch sites of immunoglobulin (Ig) constant regions where it mediates Ig isotype class switch recombination. Processes AP sites induced by successive action of AICDA and UNG. Generates staggered nicks in opposite DNA strands resulting in the formation of double-strand DNA breaks that are finally resolved via non-homologous end joining repair pathway. Has 3'-5' exodeoxyribonuclease activity on mismatched deoxyribonucleotides at the 3' termini of nicked or gapped DNA molecules during short-patch BER. Possesses DNA 3' phosphodiesterase activity capable of removing lesions (such as phosphoglycolate and 8-oxoguanine) blocking the 3' side of DNA strand breaks. Also acts as an endoribonuclease involved in the control of single-stranded RNA metabolism. Plays a role in regulating MYC mRNA turnover by preferentially cleaving in between UA and CA dinucleotides of the MYC coding region determinant (CRD). In association with NMD1, plays a role in the rRNA quality control process during cell cycle progression. Acts as a loading factor for POLB onto non-incised AP sites in DNA and stimulates the 5'-terminal deoxyribose 5'-phosphate (dRp) excision activity of POLB. Exerts reversible nuclear redox activity to regulate DNA binding affinity and transcriptional activity of transcriptional factors by controlling the redox status of their DNA-binding domain, such as the FOS/JUN AP-1 complex after exposure to IR. Involved in calcium-dependent down-regulation of parathyroid hormone (PTH) expression by binding to negative calcium response elements (nCaREs). Together with HNRNPL or the dimer XRCC5/XRCC6, associates with nCaRE, acting as an activator of transcriptional repression. May also play a role in the epigenetic regulation of gene expression by participating in DNA demethylation. Stimulates the YBX1-mediated MDR1 promoter activity, when acetylated at Lys-6 and Lys-7, leading to drug resistance. Plays a role in protection from granzyme-mediated cellular repair leading to cell death. Binds DNA and RNA. Associates, together with YBX1, on the MDR1 promoter. Together with NPM1, associates with rRNA. This is DNA repair nuclease/redox regulator APEX1 (Apex1) from Mus musculus (Mouse).